The following is a 242-amino-acid chain: MAVISMKQLLEAGVHFGHQTRRWNPKMDRYIFTERNGIYIIDLQKTVKKVETAYNFVRDLAADGGKILFVGTKKQAQDSVRDEAIRCGMYYINQRWLGGTLTNFETIQKRITRLKNLEKMQEDGTFDVLPKKEVILLKKEMDRLEKFLGGIKDMNGVPDALFVIDPRKERIAIAEAHKLNIPIVAIVDTNCDPDEIDYVIPGNDDAIRAVKLLTGKMADAVIEATAGESEEEVDVEEETTTA.

The protein belongs to the universal ribosomal protein uS2 family.

This Shouchella clausii (strain KSM-K16) (Alkalihalobacillus clausii) protein is Small ribosomal subunit protein uS2.